The following is a 95-amino-acid chain: Aspartyl/glutamyl-tRNA(Asn/Gln) amidotransferase subunit C (95 aa).

This sequence belongs to the GatC family. In terms of assembly, heterotrimer of A, B and C subunits.

It catalyses the reaction L-glutamyl-tRNA(Gln) + L-glutamine + ATP + H2O = L-glutaminyl-tRNA(Gln) + L-glutamate + ADP + phosphate + H(+). The catalysed reaction is L-aspartyl-tRNA(Asn) + L-glutamine + ATP + H2O = L-asparaginyl-tRNA(Asn) + L-glutamate + ADP + phosphate + 2 H(+). In terms of biological role, allows the formation of correctly charged Asn-tRNA(Asn) or Gln-tRNA(Gln) through the transamidation of misacylated Asp-tRNA(Asn) or Glu-tRNA(Gln) in organisms which lack either or both of asparaginyl-tRNA or glutaminyl-tRNA synthetases. The reaction takes place in the presence of glutamine and ATP through an activated phospho-Asp-tRNA(Asn) or phospho-Glu-tRNA(Gln). The chain is Aspartyl/glutamyl-tRNA(Asn/Gln) amidotransferase subunit C from Jannaschia sp. (strain CCS1).